The following is a 211-amino-acid chain: Thiamine-phosphate synthase (211 aa).

Residues 37–41 (QLRIK) and N69 each bind 4-amino-2-methyl-5-(diphosphooxymethyl)pyrimidine. Positions 70 and 89 each coordinate Mg(2+). A 4-amino-2-methyl-5-(diphosphooxymethyl)pyrimidine-binding site is contributed by S108. A 2-[(2R,5Z)-2-carboxy-4-methylthiazol-5(2H)-ylidene]ethyl phosphate-binding site is contributed by 134-136 (TQT). K137 is a 4-amino-2-methyl-5-(diphosphooxymethyl)pyrimidine binding site. Residues G166 and 186–187 (VS) each bind 2-[(2R,5Z)-2-carboxy-4-methylthiazol-5(2H)-ylidene]ethyl phosphate.

It belongs to the thiamine-phosphate synthase family. Mg(2+) serves as cofactor.

It catalyses the reaction 2-[(2R,5Z)-2-carboxy-4-methylthiazol-5(2H)-ylidene]ethyl phosphate + 4-amino-2-methyl-5-(diphosphooxymethyl)pyrimidine + 2 H(+) = thiamine phosphate + CO2 + diphosphate. It carries out the reaction 2-(2-carboxy-4-methylthiazol-5-yl)ethyl phosphate + 4-amino-2-methyl-5-(diphosphooxymethyl)pyrimidine + 2 H(+) = thiamine phosphate + CO2 + diphosphate. The catalysed reaction is 4-methyl-5-(2-phosphooxyethyl)-thiazole + 4-amino-2-methyl-5-(diphosphooxymethyl)pyrimidine + H(+) = thiamine phosphate + diphosphate. The protein operates within cofactor biosynthesis; thiamine diphosphate biosynthesis; thiamine phosphate from 4-amino-2-methyl-5-diphosphomethylpyrimidine and 4-methyl-5-(2-phosphoethyl)-thiazole: step 1/1. Functionally, condenses 4-methyl-5-(beta-hydroxyethyl)thiazole monophosphate (THZ-P) and 2-methyl-4-amino-5-hydroxymethyl pyrimidine pyrophosphate (HMP-PP) to form thiamine monophosphate (TMP). The sequence is that of Thiamine-phosphate synthase from Klebsiella pneumoniae subsp. pneumoniae (strain ATCC 700721 / MGH 78578).